Here is a 624-residue protein sequence, read N- to C-terminus: Chaperone protein HtpG (624 aa).

The a; substrate-binding stretch occupies residues 1–338; it reads MNNKNKITHT…SQDLPLNISR (338 aa). Residues 339-552 form a b region; sequence EILQDSSITH…TNDMSTQMAK (214 aa). Residues 553–624 form a c region; sequence IFSAAGQPIP…IQRINNFFIS (72 aa).

Belongs to the heat shock protein 90 family. Homodimer.

The protein resides in the cytoplasm. In terms of biological role, molecular chaperone. Has ATPase activity. This chain is Chaperone protein HtpG, found in Buchnera aphidicola subsp. Cinara cedri (strain Cc).